The chain runs to 610 residues: Glutamine--fructose-6-phosphate aminotransferase [isomerizing] (610 aa).

The active-site Nucleophile; for GATase activity is the Cys-2. The 220-residue stretch at 2–221 folds into the Glutamine amidotransferase type-2 domain; it reads CGIVGAVAQR…DGDVVDLQLA (220 aa). SIS domains lie at 286 to 426 and 459 to 600; these read AYKV…TRGR and WADR…VDKP. The active-site For Fru-6P isomerization activity is Lys-605.

As to quaternary structure, homodimer.

The protein localises to the cytoplasm. It carries out the reaction D-fructose 6-phosphate + L-glutamine = D-glucosamine 6-phosphate + L-glutamate. Its function is as follows. Catalyzes the first step in hexosamine metabolism, converting fructose-6P into glucosamine-6P using glutamine as a nitrogen source. In Bordetella bronchiseptica (strain ATCC BAA-588 / NCTC 13252 / RB50) (Alcaligenes bronchisepticus), this protein is Glutamine--fructose-6-phosphate aminotransferase [isomerizing].